The chain runs to 681 residues: Pentatricopeptide repeat-containing protein At2g22410, mitochondrial (681 aa).

The N-terminal 32 residues, 1 to 32 (MNISKAKLLLLPPPLTPKLNRSLYSHSQRRTR), are a transit peptide targeting the mitochondrion. PPR repeat units follow at residues 117-151 (NIFS…GCCE), 155-189 (DHFT…RLEL), 190-220 (VSHV…SPVR), 221-255 (DLVS…GVKP), 256-290 (DDVT…GLRM), 291-321 (TIPL…LEKR), 322-356 (TIVS…DVVL), 357-387 (WNAM…NTKP), 388-422 (DEIT…SLSL), 423-453 (NVAL…IQTR), 454-488 (NSLT…GIAP), 489-519 (DEIT…MKSR), and 525-555 (QLKH…MPME). Positions 560–635 (VWGALLFGCR…IPGCSSIEVN (76 aa)) are type E motif. A type E(+) motif region spans residues 636–666 (GIVCEFIVRDKSRPESEKIYDRLHCLGRHMR).

The protein belongs to the PPR family. PCMP-E subfamily.

Its subcellular location is the mitochondrion. The protein is Pentatricopeptide repeat-containing protein At2g22410, mitochondrial (PCMP-E28) of Arabidopsis thaliana (Mouse-ear cress).